A 311-amino-acid polypeptide reads, in one-letter code: Tricarboxylate transport protein, mitochondrial (311 aa).

Residues 1 to 13 constitute a propeptide, removed in mature form; the sequence is MPAPRAPRALAAA. Solcar repeat units lie at residues 23-111, 122-208, and 218-303; these read THPG…LSNH, TRGL…LRNW, and MNPL…VVKL. 3 consecutive transmembrane segments (helical) span residues 29–46, 86–105, and 129–143; these read ILAG…TFPT, GLSS…FGMF, and LGAG…VCPM. S156 carries the post-translational modification Phosphoserine. A run of 3 helical transmembrane segments spans residues 183 to 202, 224 to 241, and 278 to 297; these read GLTA…FFVM, GVFG…NTPL, and GTVP…FVIY.

This sequence belongs to the mitochondrial carrier (TC 2.A.29) family. In terms of processing, possesses a short cleavable presequence, which, however, is found to be dispensable both for targeting to mitochondria and insertion into the inner membrane. However, the presequence is required to keep SLC25A1 in a soluble state and thus in an import-competent state. Mature SLC25A1 lacking the presequence is prone to aggregation.

It is found in the mitochondrion inner membrane. It carries out the reaction (S)-malate(in) + citrate(out) = (S)-malate(out) + citrate(in). The enzyme catalyses D-threo-isocitrate(in) + citrate(out) = D-threo-isocitrate(out) + citrate(in). The catalysed reaction is citrate(out) + succinate(in) = citrate(in) + succinate(out). It catalyses the reaction cis-aconitate(in) + citrate(out) = cis-aconitate(out) + citrate(in). It carries out the reaction trans-aconitate(in) + citrate(out) = trans-aconitate(out) + citrate(in). The enzyme catalyses phosphoenolpyruvate(in) + citrate(out) = phosphoenolpyruvate(out) + citrate(in). The catalysed reaction is maleate(in) + citrate(out) = maleate(out) + citrate(in). In terms of biological role, mitochondrial electroneutral antiporter that exports citrate from the mitochondria into the cytosol in exchange for malate. Also able to mediate the exchange of citrate for isocitrate, phosphoenolpyruvate, cis-aconitate and to a lesser extent trans-aconitate, maleate and succinate. In the cytoplasm, citrate plays important roles in fatty acid and sterol synthesis, regulation of glycolysis, protein acetylation, and other physiopathological processes. In Homo sapiens (Human), this protein is Tricarboxylate transport protein, mitochondrial (SLC25A1).